Consider the following 327-residue polypeptide: Surface protein P12p (327 aa).

6-Cys domains follow at residues 21–168 (NIEI…LKKN) and 169–304 (IIFG…FSNY). Cystine bridges form between C25/C60, C74/C144, C93/C142, C173/C208, C223/C285, and C234/C283. Residues N246, N264, and N298 are each glycosylated (N-linked (GlcNAc...) asparagine).

Its subcellular location is the cell surface. It localises to the cell membrane. This chain is Surface protein P12p (P12p), found in Plasmodium berghei (strain Anka).